A 1045-amino-acid polypeptide reads, in one-letter code: Extracellular serine protease (1045 aa).

The signal sequence occupies residues 1–27 (MILNKRLKLAYCVFLGCYGLSIHSSLA). Residues 49-397 (QWGLEAISAE…WGRVNLRDAI (349 aa)) enclose the Peptidase S8 domain. Residues Asp76, His112, and Ser341 each act as charge relay system in the active site. The propeptide at 646–1045 (SLASTENEKA…SVNAGLTWRF (400 aa)) is translocator domain; removed in mature form. An Autotransporter domain is found at 769–1045 (IKADDNGAWA…SVNAGLTWRF (277 aa)).

The protein belongs to the peptidase S8 family.

Its subcellular location is the secreted. The chain is Extracellular serine protease from Serratia marcescens.